The chain runs to 1060 residues: Desmoglein-1-beta (1060 aa).

The first 23 residues, 1–23, serve as a signal peptide directing secretion; sequence MDWHSFRIAALLLTSLVVLEVNS. Residues 24-49 constitute a propeptide that is removed on maturation; sequence EFQIQVRDHNAKNGTIKWHSIRRQKR. Cadherin domains lie at 50 to 157, 158 to 269, 270 to 389, and 386 to 493; these read EWIK…PPVF, SMTT…IPYL, EQSS…RPGS, and RPGS…PGSD. The Extracellular portion of the chain corresponds to 50–567; that stretch reads EWIKFAAACR…ITEDNVHFGP (518 aa). N110 carries N-linked (GlcNAc...) (high mannose) asparagine glycosylation. N-linked (GlcNAc...) asparagine glycosylation is present at N180. The disordered stretch occupies residues 490 to 560; sequence PGSDGGGSSS…PEPEPFDITE (71 aa). Positions 492 to 503 are enriched in gly residues; it reads SDGGGSSSGSGG. The span at 510-519 shows a compositional bias: polar residues; sequence NGYQGTSTVG. The segment covering 525–537 has biased composition (gly residues); that stretch reads GSGGVTSSGGGSG. Residues 549 to 560 are compositionally biased toward acidic residues; it reads DEPEPEPFDITE. The chain crosses the membrane as a helical span at residues 568–588; that stretch reads AGIGLLIMGFLVLGLVPFLLI. At 589–1060 the chain is on the cytoplasmic side; it reads CCDCGGAPGG…TKYSTVQYSK (472 aa). Positions 792–801 are enriched in low complexity; sequence PDPDSSWPPQ. A disordered region spans residues 792-811; the sequence is PDPDSSWPPQSTEPMCPQST. 5 Desmoglein repeat repeats span residues 835-861, 862-891, 892-921, 922-949, and 950-978; these read AYPS…TVRE, SYAT…ERVV, GPVP…ERVI, APGS…ERVI, and QPTS…ERVV.

In terms of assembly, interacts with DSC3; there is evidence to suggest that the interaction promotes cell-cell adhesion of keratinocytes. Expressed in epidermis.

The protein resides in the cell membrane. The protein localises to the cell junction. Its subcellular location is the desmosome. It is found in the cytoplasm. It localises to the nucleus. Component of intercellular desmosome junctions. Involved in the interaction of plaque proteins and intermediate filaments mediating cell-cell adhesion. In Mus musculus (Mouse), this protein is Desmoglein-1-beta (Dsg1b).